The following is a 230-amino-acid chain: Large ribosomal subunit protein uL1 (230 aa).

The protein belongs to the universal ribosomal protein uL1 family. Part of the 50S ribosomal subunit.

In terms of biological role, binds directly to 23S rRNA. The L1 stalk is quite mobile in the ribosome, and is involved in E site tRNA release. Protein L1 is also a translational repressor protein, it controls the translation of the L11 operon by binding to its mRNA. The chain is Large ribosomal subunit protein uL1 from Nitrobacter winogradskyi (strain ATCC 25391 / DSM 10237 / CIP 104748 / NCIMB 11846 / Nb-255).